Reading from the N-terminus, the 342-residue chain is S-adenosylmethionine:tRNA ribosyltransferase-isomerase (342 aa).

It belongs to the QueA family. In terms of assembly, monomer.

It localises to the cytoplasm. It catalyses the reaction 7-aminomethyl-7-carbaguanosine(34) in tRNA + S-adenosyl-L-methionine = epoxyqueuosine(34) in tRNA + adenine + L-methionine + 2 H(+). Its pathway is tRNA modification; tRNA-queuosine biosynthesis. Its function is as follows. Transfers and isomerizes the ribose moiety from AdoMet to the 7-aminomethyl group of 7-deazaguanine (preQ1-tRNA) to give epoxyqueuosine (oQ-tRNA). This is S-adenosylmethionine:tRNA ribosyltransferase-isomerase from Streptococcus pneumoniae (strain Hungary19A-6).